We begin with the raw amino-acid sequence, 269 residues long: Regulatory protein RecX (269 aa).

This sequence belongs to the RecX family.

The protein localises to the cytoplasm. In terms of biological role, modulates RecA activity. This Listeria monocytogenes serotype 4b (strain F2365) protein is Regulatory protein RecX.